The sequence spans 111 residues: Cornifelin (111 aa).

The protein belongs to the cornifelin family. Directly or indirectly cross-linked to CE proteins loricin and involucrin (IVL).

The protein localises to the cytoplasm. Its function is as follows. Part of the insoluble cornified cell envelope (CE) of stratified squamous epithelia. The sequence is that of Cornifelin (CNFN) from Bos taurus (Bovine).